The following is a 388-amino-acid chain: MEKKAVHFGGGNIGRGFVAEFLHTAGYEVVFVDVMDSIITALQNTKSYEVTEVSDEGEATKTITNYRAINSKTHESDVINEISTATVVTCAVGPNILKFIAPAIAKGIDARTAATPLAVIACENAIGATDTLHHFIKDNTAQDRLGSMPDRARFANSAIDRIVPGQAADSGLNVRIEKFYEWAVESTPFGEFGHPDIPAIHWVSDLEPYIERKLFTVNTGHATAAYYGYNAGKKTIAEALHDSRIRGIVRDVLQETASLIIDKHEISAAEQQEYVETIITRISNPYLEDTVERVGRAPMRKVSRKERFIGPASQLAERGGKFQSLLGSLEMALRFQNVEGDEESVELAKILKENAPADAAVRLTGLDRDHPLFPHVVKVVDGVQSDAK.

5-16 (AVHFGGGNIGRG) contacts NAD(+). K213 is a catalytic residue.

It belongs to the mannitol dehydrogenase family. Monomer.

The catalysed reaction is D-mannitol 1-phosphate + NAD(+) = beta-D-fructose 6-phosphate + NADH + H(+). Functionally, catalyzes the NAD(H)-dependent interconversion of D-fructose 6-phosphate and D-mannitol 1-phosphate in the mannitol metabolic pathway. The chain is Mannitol-1-phosphate 5-dehydrogenase from Penicillium rubens (strain ATCC 28089 / DSM 1075 / NRRL 1951 / Wisconsin 54-1255) (Penicillium chrysogenum).